The chain runs to 370 residues: MANYSHAADNILQNLSPLTAFLKLTSLGFIIGVSVVGNLLISILLVKDKTLHRAPYYFLLDLCCSDILRSAICFPFVFNSVKNGSTWTYGTLTCKVIAFLGVLSCFHTAFMLFCISVTRYLAIAHHRFYTKRLTFWTCLAVICMVWTLSVAMAFPPVLDVGTYSFIREEDQCTFQHRSFRANDSLGFMLLLALILLATQLVYLKLIFFVHDRRKMKPVQFVAAVSQNWTFHGPGASGQAAANWLAGFGRGPTPPTLLGIRQNANTTGRRRLLVLDEFKMEKRISRMFYIMTFLFLTLWGPYLVACYWRVFARGPVVPGGFLTAAVWMSFAQAGINPFVCIFSNRELRRCFSTTLLYCRKSRLPREPYCVI.

Topologically, residues 1–25 are extracellular; the sequence is MANYSHAADNILQNLSPLTAFLKLT. A glycan (N-linked (GlcNAc...) asparagine) is linked at asparagine 3. Residues 26-46 traverse the membrane as a helical segment; it reads SLGFIIGVSVVGNLLISILLV. The Cytoplasmic portion of the chain corresponds to 47 to 57; the sequence is KDKTLHRAPYY. Residues 58–78 traverse the membrane as a helical segment; that stretch reads FLLDLCCSDILRSAICFPFVF. Topologically, residues 79-96 are extracellular; it reads NSVKNGSTWTYGTLTCKV. Asparagine 83 is a glycosylation site (N-linked (GlcNAc...) asparagine). Cysteine 94 and cysteine 172 are oxidised to a cystine. The chain crosses the membrane as a helical span at residues 97–117; that stretch reads IAFLGVLSCFHTAFMLFCISV. At 118 to 137 the chain is on the cytoplasmic side; sequence TRYLAIAHHRFYTKRLTFWT. The helical transmembrane segment at 138–158 threads the bilayer; it reads CLAVICMVWTLSVAMAFPPVL. The Extracellular portion of the chain corresponds to 159 to 188; sequence DVGTYSFIREEDQCTFQHRSFRANDSLGFM. An N-linked (GlcNAc...) asparagine glycan is attached at asparagine 182. Residues 189–209 traverse the membrane as a helical segment; it reads LLLALILLATQLVYLKLIFFV. Residues 210 to 286 lie on the Cytoplasmic side of the membrane; the sequence is HDRRKMKPVQ…FKMEKRISRM (77 aa). The helical transmembrane segment at 287–307 threads the bilayer; that stretch reads FYIMTFLFLTLWGPYLVACYW. The Extracellular portion of the chain corresponds to 308–313; that stretch reads RVFARG. A helical membrane pass occupies residues 314 to 334; sequence PVVPGGFLTAAVWMSFAQAGI. At 335-370 the chain is on the cytoplasmic side; it reads NPFVCIFSNRELRRCFSTTLLYCRKSRLPREPYCVI.

Belongs to the G-protein coupled receptor 1 family. Interacts with DLG4 and DLG3. Highly expressed in brain and testis. Lower levels in small intestine, placenta and spleen. In brain regions, detected in all regions tested, but somewhat lower levels in the corpus callosum, medulla and spinal cord.

It localises to the cell membrane. The protein localises to the endoplasmic reticulum. Orphan receptor. This Homo sapiens (Human) protein is Probable G-protein coupled receptor 85 (GPR85).